The primary structure comprises 295 residues: Pyridoxal 5'-phosphate synthase subunit PdxS (295 aa).

Asp-25 is a D-ribose 5-phosphate binding site. Lys-82 serves as the catalytic Schiff-base intermediate with D-ribose 5-phosphate. D-ribose 5-phosphate is bound at residue Gly-154. Residue Arg-166 participates in D-glyceraldehyde 3-phosphate binding. Residues Gly-215 and Gly-236–Ser-237 contribute to the D-ribose 5-phosphate site.

This sequence belongs to the PdxS/SNZ family. In the presence of PdxT, forms a dodecamer of heterodimers.

The enzyme catalyses aldehydo-D-ribose 5-phosphate + D-glyceraldehyde 3-phosphate + L-glutamine = pyridoxal 5'-phosphate + L-glutamate + phosphate + 3 H2O + H(+). Its pathway is cofactor biosynthesis; pyridoxal 5'-phosphate biosynthesis. In terms of biological role, catalyzes the formation of pyridoxal 5'-phosphate from ribose 5-phosphate (RBP), glyceraldehyde 3-phosphate (G3P) and ammonia. The ammonia is provided by the PdxT subunit. Can also use ribulose 5-phosphate and dihydroxyacetone phosphate as substrates, resulting from enzyme-catalyzed isomerization of RBP and G3P, respectively. This Staphylococcus epidermidis (strain ATCC 35984 / DSM 28319 / BCRC 17069 / CCUG 31568 / BM 3577 / RP62A) protein is Pyridoxal 5'-phosphate synthase subunit PdxS.